A 255-amino-acid polypeptide reads, in one-letter code: NAD kinase (255 aa).

The Proton acceptor role is filled by Asp44. Residues 44–45 (DG), His49, 114–115 (NE), Asp144, Ala152, 155–160 (SAYNLS), and Gln216 contribute to the NAD(+) site.

Belongs to the NAD kinase family. A divalent metal cation serves as cofactor.

The protein localises to the cytoplasm. It carries out the reaction NAD(+) + ATP = ADP + NADP(+) + H(+). Involved in the regulation of the intracellular balance of NAD and NADP, and is a key enzyme in the biosynthesis of NADP. Catalyzes specifically the phosphorylation on 2'-hydroxyl of the adenosine moiety of NAD to yield NADP. This Rickettsia canadensis (strain McKiel) protein is NAD kinase.